The chain runs to 207 residues: Protein LURP1 (207 aa).

The protein belongs to the LOR family. As to expression, limited to discrete pathogen infection sites in leaves.

Functionally, involved in basal defense against virulent oomycetes. Might be related to the phospholipid scramblase and tubby-like superfamily of membrane tethered transcription factors. In Arabidopsis thaliana (Mouse-ear cress), this protein is Protein LURP1 (LURP1).